The chain runs to 945 residues: Splicing factor, suppressor of white-apricot homolog (945 aa).

Disordered stretches follow at residues 1-28 (MYGAGGGRAKPERKGGVKEEAGPGGTGT) and 156-185 (DYYDPSEPTEEEEPSKQREKNEAENLEENE). 2 stretches are compositionally biased toward basic and acidic residues: residues 9 to 21 (AKPERKGGVKEEA) and 169 to 178 (PSKQREKNEA). One copy of the SURP motif 1 repeat lies at 211–253 (IIERTANFVCKQGAQFEIMLKAKQARNSQFDFLRFDHYLNPYY). The tract at residues 271 to 301 (SKNEEKKKSGPTSDNEEEDDEEDGSYLHPSL) is disordered. A Phosphoserine modification is found at serine 283. The segment covering 284–294 (DNEEEDDEEDG) has biased composition (acidic residues). Lysine 315 carries the post-translational modification N6-acetyllysine. 2 disordered regions span residues 332-355 (KAQADSSAPAPPTADGTPAQPSQV) and 403-448 (SSSP…PVAI). The segment covering 335 to 352 (ADSSAPAPPTADGTPAQP) has biased composition (low complexity). Pro residues predominate over residues 412-426 (VPPPPGTTPPPPPTT). Positions 427-447 (AEPSSGVTSTTTTTSALAPVA) are enriched in low complexity. An SURP motif 2 repeat occupies 458-498 (VIDKLAEYVARNGLKFETSVRAKNDQRFEFLQPWHQYNAYY). Disordered stretches follow at residues 512 to 564 (GSTQ…KSTV), 589 to 680 (PLEK…QAER), and 712 to 921 (DTGV…VQSK). The span at 514–527 (TQAASTAEEAPTET) shows a compositional bias: low complexity. Residues 528–540 (AVEESGEAGEDGA) show a composition bias toward acidic residues. Basic and acidic residues predominate over residues 589–598 (PLEKNRVKLD). 2 positions are modified to phosphoserine: serine 601 and serine 621. The span at 615–630 (SSVANPSPAAAPPSVA) shows a compositional bias: low complexity. Residues 632 to 686 (EEKKPQLTQEELEAKQAKQKLEDRLAAAAREKLAQASKESKEKQLQAERKRKAAL) adopt a coiled-coil conformation. Threonine 639 carries the phosphothreonine modification. Composition is skewed to basic and acidic residues over residues 643-679 (LEAKQAKQKLEDRLAAAAREKLAQASKESKEKQLQAE) and 733-752 (KPPERPSNRCRDPPREEERE). Composition is skewed to basic residues over residues 753 to 787 (KKKKKHKKRSRTRSRSPKYHSSSKPRSRSHSKAKH) and 795 to 810 (TVRRSRSRSRSPRRRA). Positions 811-821 (HSPERRREERS) are enriched in basic and acidic residues. Residues serine 829 and serine 831 each carry the phosphoserine modification. Over residues 835–861 (SRKRTRSRSPHEKKKKRRSRSRTKAKA) the composition is skewed to basic residues. The span at 871–894 (QAAQRPSAHSAHSASISPVESRGS) shows a compositional bias: low complexity. Basic and acidic residues predominate over residues 895-908 (SQERSRGVSQEKDG). A phosphoserine mark is found at serine 899 and serine 903. Low complexity predominate over residues 909–920 (QISSAIVSSVQS).

It is found in the nucleus. Plays a role as an alternative splicing regulator. Regulates its own expression at the level of RNA processing. Also regulates the splicing of fibronectin and CD45 genes. May act, at least in part, by interaction with other R/S-containing splicing factors. Represses the splicing of MAPT/Tau exon 10. The sequence is that of Splicing factor, suppressor of white-apricot homolog (Sfswap) from Mus musculus (Mouse).